The primary structure comprises 201 residues: Small ribosomal subunit protein uS4c (201 aa).

The segment at 20-44 is disordered; that stretch reads GLTSKRPRAGSDLRNQSRSGKKSQY. The S4 RNA-binding domain occupies 89–152; that stretch reads MRLDNILFRL…NSRTLVQNLL (64 aa).

Belongs to the universal ribosomal protein uS4 family. As to quaternary structure, part of the 30S ribosomal subunit. Contacts protein S5. The interaction surface between S4 and S5 is involved in control of translational fidelity.

It localises to the plastid. It is found in the chloroplast. Its function is as follows. One of the primary rRNA binding proteins, it binds directly to 16S rRNA where it nucleates assembly of the body of the 30S subunit. In terms of biological role, with S5 and S12 plays an important role in translational accuracy. This Arabis hirsuta (Hairy rock-cress) protein is Small ribosomal subunit protein uS4c (rps4).